Reading from the N-terminus, the 535-residue chain is Alkaline phosphatase, placental type (535 aa).

A signal peptide spans Met-1–Gly-22. Mg(2+) is bound at residue Asp-64. The Zn(2+) site is built by Asp-64 and Ser-114. The active-site Phosphoserine intermediate is Ser-114. Cys-143 and Cys-205 form a disulfide bridge. Asn-144 is a glycosylation site (N-linked (GlcNAc...) asparagine). Ser-177 provides a ligand contact to Mg(2+). Glu-238 provides a ligand contact to Ca(2+). Asn-271 carries an N-linked (GlcNAc...) asparagine glycan. Residues Phe-291, Glu-292, and Asp-307 each coordinate Ca(2+). Glu-333 is a binding site for Mg(2+). Asp-338, His-342, Asp-379, and His-380 together coordinate Zn(2+). The segment at Asp-425–Leu-449 is disordered. Residues Ser-434–Ala-446 are compositionally biased toward polar residues. A Zn(2+)-binding site is contributed by His-454. Residues Cys-489 and Cys-496 are joined by a disulfide bond. The GPI-anchor amidated aspartate moiety is linked to residue Asp-506. Residues Ala-507–Pro-535 constitute a propeptide, removed in mature form. A helical transmembrane segment spans residues Ser-513–Leu-529.

It belongs to the alkaline phosphatase family. Homodimer. The cofactor is Mg(2+). Zn(2+) serves as cofactor. Requires Ca(2+) as cofactor. Detected in placenta (at protein level).

It is found in the cell membrane. The enzyme catalyses a phosphate monoester + H2O = an alcohol + phosphate. In terms of biological role, alkaline phosphatase that can hydrolyze various phosphate compounds. This Homo sapiens (Human) protein is Alkaline phosphatase, placental type.